The following is a 224-amino-acid chain: N-(5'-phosphoribosyl)anthranilate isomerase (224 aa).

It belongs to the TrpF family.

The enzyme catalyses N-(5-phospho-beta-D-ribosyl)anthranilate = 1-(2-carboxyphenylamino)-1-deoxy-D-ribulose 5-phosphate. Its pathway is amino-acid biosynthesis; L-tryptophan biosynthesis; L-tryptophan from chorismate: step 3/5. The sequence is that of N-(5'-phosphoribosyl)anthranilate isomerase from Sinorhizobium fredii (strain NBRC 101917 / NGR234).